The primary structure comprises 355 residues: Tetraacyldisaccharide 4'-kinase (355 aa).

48–55 (SVGGTGKT) is a binding site for ATP.

This sequence belongs to the LpxK family.

It carries out the reaction a lipid A disaccharide + ATP = a lipid IVA + ADP + H(+). It functions in the pathway glycolipid biosynthesis; lipid IV(A) biosynthesis; lipid IV(A) from (3R)-3-hydroxytetradecanoyl-[acyl-carrier-protein] and UDP-N-acetyl-alpha-D-glucosamine: step 6/6. Its function is as follows. Transfers the gamma-phosphate of ATP to the 4'-position of a tetraacyldisaccharide 1-phosphate intermediate (termed DS-1-P) to form tetraacyldisaccharide 1,4'-bis-phosphate (lipid IVA). This is Tetraacyldisaccharide 4'-kinase from Pelodictyon phaeoclathratiforme (strain DSM 5477 / BU-1).